Consider the following 249-residue polypeptide: Deoxyribose-phosphate aldolase (249 aa).

Residue aspartate 94 is the Proton donor/acceptor of the active site. The active-site Schiff-base intermediate with acetaldehyde is the lysine 158. The active-site Proton donor/acceptor is lysine 200.

It belongs to the DeoC/FbaB aldolase family. DeoC type 1 subfamily.

Its subcellular location is the cytoplasm. The catalysed reaction is 2-deoxy-D-ribose 5-phosphate = D-glyceraldehyde 3-phosphate + acetaldehyde. Its pathway is carbohydrate degradation; 2-deoxy-D-ribose 1-phosphate degradation; D-glyceraldehyde 3-phosphate and acetaldehyde from 2-deoxy-alpha-D-ribose 1-phosphate: step 2/2. Catalyzes a reversible aldol reaction between acetaldehyde and D-glyceraldehyde 3-phosphate to generate 2-deoxy-D-ribose 5-phosphate. This chain is Deoxyribose-phosphate aldolase, found in Thermoplasma volcanium (strain ATCC 51530 / DSM 4299 / JCM 9571 / NBRC 15438 / GSS1).